The chain runs to 376 residues: Nucleoside diphosphate kinase homolog 7 (376 aa).

In terms of domain architecture, DM10 spans 3-91; sequence HSERFVFIAE…YTARQLGSRK (89 aa).

This sequence belongs to the NDK family. In terms of assembly, component of sperm flagellar doublet microtubules. Component of the gamma-tubulin ring complex. Post-translationally, undergoes autophosphorylation. Expressed in airway epithelial cells.

It is found in the cytoplasm. Its subcellular location is the cytoskeleton. The protein resides in the microtubule organizing center. It localises to the centrosome. The protein localises to the nucleus. It is found in the spindle. Its subcellular location is the cilium axoneme. The protein resides in the flagellum axoneme. It localises to the cell projection. The protein localises to the cilium. Possesses an intrinsic kinase activity. Displays 3'-5' exonuclease activity with a preference for single-stranded DNA. Does not seem to have nucleoside diphosphate kinase activity. Functional component of the gamma-tubulin ring complex, implicated in the regulation of the microtubule-nucleating activity of the gamma-tubulin ring complex in centrosomes, in a kinase activity-dependent manner. Part of the dynein-decorated doublet microtubules (DMTs) in cilia axoneme, which is required for motile cilia beating. The protein is Nucleoside diphosphate kinase homolog 7 of Homo sapiens (Human).